Here is a 72-residue protein sequence, read N- to C-terminus: DNA-directed RNA polymerase subunit Rpo10 (72 aa).

Cysteine 7, cysteine 10, cysteine 54, and cysteine 55 together coordinate Zn(2+).

It belongs to the archaeal Rpo10/eukaryotic RPB10 RNA polymerase subunit family. Part of the RNA polymerase complex. The cofactor is Zn(2+).

The protein resides in the cytoplasm. The enzyme catalyses RNA(n) + a ribonucleoside 5'-triphosphate = RNA(n+1) + diphosphate. Functionally, DNA-dependent RNA polymerase (RNAP) catalyzes the transcription of DNA into RNA using the four ribonucleoside triphosphates as substrates. The chain is DNA-directed RNA polymerase subunit Rpo10 from Picrophilus torridus (strain ATCC 700027 / DSM 9790 / JCM 10055 / NBRC 100828 / KAW 2/3).